The chain runs to 163 residues: UPF0262 protein RPE_4483 (163 aa).

This sequence belongs to the UPF0262 family.

This Rhodopseudomonas palustris (strain BisA53) protein is UPF0262 protein RPE_4483.